Consider the following 712-residue polypeptide: Asp/Glu-specific dipeptidyl-peptidase (712 aa).

A signal peptide spans 1 to 18 (MKRFFKMALFLGVSALYG). Active-site charge relay system residues include His-84, Asp-220, and Ser-647.

Belongs to the peptidase S46 family.

Its function is as follows. Catalyzes the removal of dipeptides from the N-terminus of oligopeptides. Shows a strict specificity for acidic residues (Asp or Glu) in the P1 position, and has probably a hydrophobic residue preference at the P2 position. Preferentially cleaves the synthetic substrate Leu-Asp-methylcoumaryl-7-amide (Leu-Asp-MCA) as compared to Leu-Glu-MCA. The polypeptide is Asp/Glu-specific dipeptidyl-peptidase (dpp11) (Capnocytophaga gingivalis).